The chain runs to 671 residues: Preterminal protein (671 aa).

The short motif at 380–389 (RLPVRRRRRR) is the Nuclear localization signal element. A disordered region spans residues 386–409 (RRRRVPPPPPPPEEEEEGEALMEE). The segment covering 397–409 (PEEEEEGEALMEE) has biased composition (acidic residues). At serine 580 the chain carries O-(5'-phospho-DNA)-serine. A disordered region spans residues 645-671 (GADVPLPPLPAGPEPPLPPGARPRHRF). Residues 649 to 665 (PLPPLPAGPEPPLPPGA) show a composition bias toward pro residues.

Belongs to the adenoviridae terminal protein family. Heterodimer with the polymerase; this heterodimer binds to bp 9 to 18 of the genome. Interacts with host POU2F1; POU2F1 binds to the auxiliary sequences in the inverted terminal repeats and tethers the pTP-POL heterodimer to the origin DNA thereby participating in the assembly of the pre-initiation complex (POL-TP-DBP-NFIA-POU2F1). Preterminal protein is used to replicate viral genome, upon genomic encapsidation it is processed first into iTP and finally into TP by adenovirus protease.

Its subcellular location is the host nucleus matrix. Its function is as follows. Protein covalently bound to the viral DNA that acts as a primer for viral genomic replication by DNA strand displacement. Assembles on the viral origin of replication in an initiation complex with viral polymerase, DBP, host NFIA and host POU2F1/OCT1. During initiation, the polymerase covalently couples the first dCTP with Ser-580 of pTP. The terminal protein stimulates the template activity over 20 fold compared to protein-free templates. Neo-synthesized viral genomes are linked to two preterminal proteins, one for each 5' end. These new genomes are encapsidated in the nucleus, and during capsid maturation by viral protease, preterminal protein is first cleaved into intermediary (iTP), then into mature TP. May play a role in host nuclear matrix localization of genomic DNA. This chain is Preterminal protein, found in Homo sapiens (Human).